A 694-amino-acid chain; its full sequence is Elongation factor G (694 aa).

Residues 10-285 (EKTRNIGIMA…GVVDYLPSPL (276 aa)) form the tr-type G domain. Residues 19 to 26 (AHIDAGKT), 83 to 87 (DTPGH), and 137 to 140 (NKMD) each bind GTP.

It belongs to the TRAFAC class translation factor GTPase superfamily. Classic translation factor GTPase family. EF-G/EF-2 subfamily.

The protein localises to the cytoplasm. Functionally, catalyzes the GTP-dependent ribosomal translocation step during translation elongation. During this step, the ribosome changes from the pre-translocational (PRE) to the post-translocational (POST) state as the newly formed A-site-bound peptidyl-tRNA and P-site-bound deacylated tRNA move to the P and E sites, respectively. Catalyzes the coordinated movement of the two tRNA molecules, the mRNA and conformational changes in the ribosome. The polypeptide is Elongation factor G (Lactobacillus delbrueckii subsp. bulgaricus (strain ATCC 11842 / DSM 20081 / BCRC 10696 / JCM 1002 / NBRC 13953 / NCIMB 11778 / NCTC 12712 / WDCM 00102 / Lb 14)).